We begin with the raw amino-acid sequence, 421 residues long: Adenylosuccinate synthetase (421 aa).

Residues 11–17 and 39–41 each bind GTP; these read GDEGKGK and GHT. D12 serves as the catalytic Proton acceptor. Mg(2+) is bound by residues D12 and G39. Residues 12 to 15, 37 to 40, T129, R143, N219, T234, and R298 contribute to the IMP site; these read DEGK and NAGH. Residue H40 is the Proton donor of the active site. 294-300 provides a ligand contact to substrate; that stretch reads VTTGRRR. Residues R300, 326 to 328, and 409 to 411 each bind GTP; these read KLD and GTG.

This sequence belongs to the adenylosuccinate synthetase family. In terms of assembly, homodimer. The cofactor is Mg(2+).

It localises to the cytoplasm. The enzyme catalyses IMP + L-aspartate + GTP = N(6)-(1,2-dicarboxyethyl)-AMP + GDP + phosphate + 2 H(+). It participates in purine metabolism; AMP biosynthesis via de novo pathway; AMP from IMP: step 1/2. Functionally, plays an important role in the de novo pathway and in the salvage pathway of purine nucleotide biosynthesis. Catalyzes the first committed step in the biosynthesis of AMP from IMP. In Paracoccidioides lutzii (strain ATCC MYA-826 / Pb01) (Paracoccidioides brasiliensis), this protein is Adenylosuccinate synthetase.